A 548-amino-acid polypeptide reads, in one-letter code: Membrane protein insertase YidC (548 aa).

A helical membrane pass occupies residues 6 to 26 (NLLVIALLFVSFMIWQAWEQD). Residues 28 to 56 (NPQPQTQQTTQTTTTAAGSAADQGVPASG) form a disordered region. Residues 29–42 (PQPQTQQTTQTTTT) are compositionally biased toward low complexity. The next 4 helical transmembrane spans lie at 350-370 (FVGN…GIMY), 424-444 (FPLI…MGSI), 458-478 (LSAQ…MFFI), and 499-519 (PVIF…YYIV).

It belongs to the OXA1/ALB3/YidC family. Type 1 subfamily. In terms of assembly, interacts with the Sec translocase complex via SecD. Specifically interacts with transmembrane segments of nascent integral membrane proteins during membrane integration.

The protein localises to the cell inner membrane. Functionally, required for the insertion and/or proper folding and/or complex formation of integral membrane proteins into the membrane. Involved in integration of membrane proteins that insert both dependently and independently of the Sec translocase complex, as well as at least some lipoproteins. Aids folding of multispanning membrane proteins. The sequence is that of Membrane protein insertase YidC from Salmonella agona (strain SL483).